The following is a 1166-amino-acid chain: ATP-dependent helicase/deoxyribonuclease subunit B (1166 aa).

The 390-residue stretch at 1–390 folds into the UvrD-like helicase ATP-binding domain; sequence MGVEFLVGRS…HPLIEFIRSS (390 aa). 8–15 contributes to the ATP binding site; the sequence is GRSGSGKT. The region spanning 281-586 is the UvrD-like helicase C-terminal domain; sequence TKRHQHAPEL…HFSLIPPALD (306 aa). Residues Cys-801, Cys-1121, Cys-1124, and Cys-1130 each contribute to the [4Fe-4S] cluster site.

Belongs to the helicase family. AddB/RexB type 1 subfamily. Heterodimer of AddA and AddB. Requires Mg(2+) as cofactor. It depends on [4Fe-4S] cluster as a cofactor.

In terms of biological role, the heterodimer acts as both an ATP-dependent DNA helicase and an ATP-dependent, dual-direction single-stranded exonuclease. Recognizes the chi site generating a DNA molecule suitable for the initiation of homologous recombination. The AddB subunit has 5' -&gt; 3' nuclease activity but not helicase activity. This chain is ATP-dependent helicase/deoxyribonuclease subunit B, found in Bacillus velezensis (strain DSM 23117 / BGSC 10A6 / LMG 26770 / FZB42) (Bacillus amyloliquefaciens subsp. plantarum).